We begin with the raw amino-acid sequence, 468 residues long: 6-phospho-beta-galactosidase (468 aa).

Residues Gln-19, His-116, Asn-159, Glu-160, and Asn-297 each contribute to the D-galactose 6-phosphate site. Residue Glu-160 is the Proton donor of the active site. Glu-375 (nucleophile) is an active-site residue. The D-galactose 6-phosphate site is built by Ser-428, Trp-429, Lys-435, and Tyr-437.

Belongs to the glycosyl hydrolase 1 family.

It carries out the reaction a 6-phospho-beta-D-galactoside + H2O = D-galactose 6-phosphate + an alcohol. It functions in the pathway carbohydrate metabolism; lactose degradation; D-galactose 6-phosphate and beta-D-glucose from lactose 6-phosphate: step 1/1. The protein is 6-phospho-beta-galactosidase of Streptococcus pyogenes serotype M6 (strain ATCC BAA-946 / MGAS10394).